The sequence spans 198 residues: ATP-dependent Clp protease proteolytic subunit 2 (198 aa).

The Nucleophile role is filled by serine 101. Histidine 126 is an active-site residue.

It belongs to the peptidase S14 family. Fourteen ClpP subunits assemble into 2 heptameric rings which stack back to back to give a disk-like structure with a central cavity, resembling the structure of eukaryotic proteasomes.

The protein localises to the cytoplasm. It carries out the reaction Hydrolysis of proteins to small peptides in the presence of ATP and magnesium. alpha-casein is the usual test substrate. In the absence of ATP, only oligopeptides shorter than five residues are hydrolyzed (such as succinyl-Leu-Tyr-|-NHMec, and Leu-Tyr-Leu-|-Tyr-Trp, in which cleavage of the -Tyr-|-Leu- and -Tyr-|-Trp bonds also occurs).. Its function is as follows. Cleaves peptides in various proteins in a process that requires ATP hydrolysis. Has a chymotrypsin-like activity. Plays a major role in the degradation of misfolded proteins. This is ATP-dependent Clp protease proteolytic subunit 2 from Thermosynechococcus vestitus (strain NIES-2133 / IAM M-273 / BP-1).